The chain runs to 351 residues: Putative F-box protein At5g52610 (351 aa).

In terms of domain architecture, F-box spans 1–41 (MISEDLLVEILLRLPVKPLARCLCVCKLWATIIRSRYFINL).

In Arabidopsis thaliana (Mouse-ear cress), this protein is Putative F-box protein At5g52610.